The chain runs to 1066 residues: Pumilio homolog 2 (1066 aa).

Positions 1–260 (MNHDFQALAL…ATVGLFDYNS (260 aa)) are interaction with SNAPIN. A phosphoserine mark is found at Ser67, Ser82, and Ser102. The tract at residues 106–204 (KLDSRFRKGN…NPSEGLGPLP (99 aa)) is disordered. Basic and acidic residues predominate over residues 119–133 (RDAETDGPEKGDQKG). Residues Ser136, Ser178, and Ser182 each carry the phosphoserine modification. Phosphothreonine is present on residues Thr184 and Thr396. The interval 494–553 (STNGLFRPIGTQPPQQQQQQPSTNLQSNSFYGSSSLTNSSQSSSLFSHGPGQPGSTSLGF) is disordered. Over residues 505 to 514 (QPPQQQQQQP) the composition is skewed to low complexity. Residues 515-525 (STNLQSNSFYG) are compositionally biased toward polar residues. The segment covering 526 to 540 (SSSLTNSSQSSSLFS) has biased composition (low complexity). A phosphoserine mark is found at Ser587 and Ser592. Residues 620-650 (SPIGMPLPSQTPGHSLTPPPSLSSHGSSSSL) are disordered. The segment covering 630 to 650 (TPGHSLTPPPSLSSHGSSSSL) has biased composition (low complexity). Residue Arg674 is modified to Omega-N-methylarginine. Phosphoserine is present on residues Ser684 and Ser700. Positions 706–1048 (GRSRLLEDFR…HILAKLEKYY (343 aa)) constitute a PUM-HD domain. 8 Pumilio repeats span residues 726–761 (DLIG…MVFN), 762–797 (EILQ…ALAT), 798–835 (RIRG…EMVK), 836–871 (ELDG…FIID), 872–907 (AFKG…PILE), 908–943 (ELHQ…KIVS), 944–979 (EIRG…LLID), and 983–1022 (CQND…IIMH). The segment at 741-745 (SRFIQ) is adenine-nucleotide binding in RNA target. A uracil-nucleotide binding in RNA target region spans residues 777 to 781 (NYVIQ). Positions 813 to 817 (CRVIQ) are adenine-nucleotide binding in RNA target. The segment at 851–855 (NHVVQ) is non-specific-nucleotide binding in RNA target. Residues 887–891 (CRVIQ) are adenine-nucleotide binding in RNA target. The segment at 923–927 (NYVIQ) is uracil-nucleotide binding in RNA target. Positions 959–963 (SNVVE) are guanine-nucleotide binding in RNA target. Residues 1002–1006 (NYVVQ) form a uracil-nucleotide binding in RNA target region.

As to quaternary structure, homodimer; homodimerizes in vitro. Interacts with DAZ1, DAZL and NANOS1 via its pumilio repeats. Interacts with NANOS3. Interacts with SNAPIN. Recruits the CCR4-POP2-NOT deadenylase leading to translational inhibition and mRNA degradation. Interacts with DDX20. In case of viral infection, interacts with DHX58. Interacts with TRIM71 (via NHL repeats) in an RNA-dependent manner. As to expression, expressed in male germ cells of adult testis (at protein level). Highly expressed in testis and ovary. Predominantly expressed in stem cells and germ cells. Expressed at lower level in brain, heart, kidney, liver, muscle, placenta, intestine and stomach Expressed in cerebellum, corpus callosum, caudate nucleus, hippocampus, medulla oblongata and putamen. Expressed in all fetal tissues tested.

It localises to the cytoplasm. The protein localises to the cytoplasmic granule. The protein resides in the perinuclear region. Sequence-specific RNA-binding protein that acts as a post-transcriptional repressor by binding the 3'-UTR of mRNA targets. Binds to an RNA consensus sequence, the Pumilio Response Element (PRE), 5'-UGUANAUA-3', that is related to the Nanos Response Element (NRE) (, PubMed:21397187). Mediates post-transcriptional repression of transcripts via different mechanisms: acts via direct recruitment of the CCR4-POP2-NOT deadenylase leading to translational inhibition and mRNA degradation. Also mediates deadenylation-independent repression by promoting accessibility of miRNAs. Acts as a post-transcriptional repressor of E2F3 mRNAs by binding to its 3'-UTR and facilitating miRNA regulation. Plays a role in cytoplasmic sensing of viral infection. Represses a program of genes necessary to maintain genomic stability such as key mitotic, DNA repair and DNA replication factors. Its ability to repress those target mRNAs is regulated by the lncRNA NORAD (non-coding RNA activated by DNA damage) which, due to its high abundance and multitude of PUMILIO binding sites, is able to sequester a significant fraction of PUM1 and PUM2 in the cytoplasm. May regulate DCUN1D3 mRNA levels. May support proliferation and self-renewal of stem cells. Binds specifically to miRNA MIR199A precursor, with PUM1, regulates miRNA MIR199A expression at a postranscriptional level. The sequence is that of Pumilio homolog 2 (PUM2) from Homo sapiens (Human).